Here is a 400-residue protein sequence, read N- to C-terminus: Elongation factor Tu (400 aa).

One can recognise a tr-type G domain in the interval 10-209; sequence KPHVNIGTIG…EVDNYIPTPE (200 aa). The tract at residues 19–26 is G1; that stretch reads GHVDHGKT. 19 to 26 is a GTP binding site; the sequence is GHVDHGKT. Mg(2+) is bound at residue Thr26. The interval 60–64 is G2; that stretch reads GITIN. The segment at 81–84 is G3; sequence DCPG. GTP contacts are provided by residues 81 to 85 and 136 to 139; these read DCPGH and NKCD. The segment at 136–139 is G4; the sequence is NKCD. The G5 stretch occupies residues 174 to 176; it reads SAL.

It belongs to the TRAFAC class translation factor GTPase superfamily. Classic translation factor GTPase family. EF-Tu/EF-1A subfamily. In terms of assembly, monomer.

The protein localises to the cytoplasm. It carries out the reaction GTP + H2O = GDP + phosphate + H(+). Its function is as follows. GTP hydrolase that promotes the GTP-dependent binding of aminoacyl-tRNA to the A-site of ribosomes during protein biosynthesis. In Ruminiclostridium cellulolyticum (strain ATCC 35319 / DSM 5812 / JCM 6584 / H10) (Clostridium cellulolyticum), this protein is Elongation factor Tu.